A 243-amino-acid polypeptide reads, in one-letter code: 1-(5-phosphoribosyl)-5-[(5-phosphoribosylamino)methylideneamino] imidazole-4-carboxamide isomerase (243 aa).

The active-site Proton acceptor is D14. The active-site Proton donor is the D135.

It belongs to the HisA/HisF family.

It localises to the cytoplasm. It carries out the reaction 1-(5-phospho-beta-D-ribosyl)-5-[(5-phospho-beta-D-ribosylamino)methylideneamino]imidazole-4-carboxamide = 5-[(5-phospho-1-deoxy-D-ribulos-1-ylimino)methylamino]-1-(5-phospho-beta-D-ribosyl)imidazole-4-carboxamide. It participates in amino-acid biosynthesis; L-histidine biosynthesis; L-histidine from 5-phospho-alpha-D-ribose 1-diphosphate: step 4/9. The chain is 1-(5-phosphoribosyl)-5-[(5-phosphoribosylamino)methylideneamino] imidazole-4-carboxamide isomerase from Rubrobacter xylanophilus (strain DSM 9941 / JCM 11954 / NBRC 16129 / PRD-1).